Reading from the N-terminus, the 663-residue chain is UvrABC system protein B (663 aa).

The Helicase ATP-binding domain maps to 30 to 417; the sequence is DGIKAGKRHQ…TDKMVEQIIR (388 aa). Residue 43 to 50 coordinates ATP; it reads GATGTGKT. Positions 96–119 match the Beta-hairpin motif; the sequence is YYDYYQPEAYVPSTDTFIEKDASI. Residues 434-600 enclose the Helicase C-terminal domain; that stretch reads QIDDLLSEIQ…TINKKIHDLI (167 aa). A UVR domain is found at 627 to 662; that stretch reads QKTIDNIEKEMKQAAKDLDFEKATELRDMLFELKAE.

It belongs to the UvrB family. In terms of assembly, forms a heterotetramer with UvrA during the search for lesions. Interacts with UvrC in an incision complex.

It localises to the cytoplasm. The UvrABC repair system catalyzes the recognition and processing of DNA lesions. A damage recognition complex composed of 2 UvrA and 2 UvrB subunits scans DNA for abnormalities. Upon binding of the UvrA(2)B(2) complex to a putative damaged site, the DNA wraps around one UvrB monomer. DNA wrap is dependent on ATP binding by UvrB and probably causes local melting of the DNA helix, facilitating insertion of UvrB beta-hairpin between the DNA strands. Then UvrB probes one DNA strand for the presence of a lesion. If a lesion is found the UvrA subunits dissociate and the UvrB-DNA preincision complex is formed. This complex is subsequently bound by UvrC and the second UvrB is released. If no lesion is found, the DNA wraps around the other UvrB subunit that will check the other stand for damage. In Staphylococcus aureus (strain Mu50 / ATCC 700699), this protein is UvrABC system protein B.